The chain runs to 613 residues: Portal protein (613 aa).

Residues 577–613 (ATGGDHGIRQAPSARGDTEPDHAKSKPARDPPPGAGS) are disordered. The segment covering 592–605 (GDTEPDHAKSKPAR) has biased composition (basic and acidic residues).

The protein belongs to the herpesviridae portal protein family. In terms of assembly, homododecamerizes. Interacts with terminase subunits TRM1 and TRM3.

The protein resides in the virion. It localises to the host nucleus. It is found in the host cytoplasm. Its function is as follows. Forms a portal in the viral capsid through which viral DNA is translocated during DNA packaging. Assembles as a dodecamer at a single fivefold axe of the T=16 icosahedric capsid. Binds to the molecular motor that translocates the viral DNA, termed terminase. In Epstein-Barr virus (strain B95-8) (HHV-4), this protein is Portal protein.